We begin with the raw amino-acid sequence, 3135 residues long: Gametocyte surface protein P230 (3135 aa).

An N-terminal signal peptide occupies residues 1 to 20; the sequence is MKKIITLKNLFLIILVYIFS. N-linked (GlcNAc...) asparagine glycosylation is found at N76, N111, N135, and N239. Positions 266-470 are disordered; the sequence is EEDMSPRDNF…EEKDEGGESF (205 aa). Acidic residues-rich tracts occupy residues 276–321 and 329–345; these read VIDD…EEQL and VGAE…DEDS. The span at 346-358 shows a compositional bias: basic and acidic residues; the sequence is VEARDGDMIRVDE. 2 stretches are compositionally biased toward acidic residues: residues 376 to 444 and 458 to 467; these read DVDE…EGEY and GDEEEKDEGG. An N-linked (GlcNAc...) asparagine glycan is attached at N585. 6-Cys domains lie at 589–730 and 733–887; these read KEYV…VEPY and KING…INEE. 4 disulfides stabilise this stretch: C593-C611, C626-C706, C737-C781, and C804-C862. Residues N821, N829, N889, N961, N1079, N1089, and N1153 are each glycosylated (N-linked (GlcNAc...) asparagine). 6-Cys domains lie at 918-1133, 1136-1275, 1285-1432, and 1435-1560; these read HDYT…ISKQ, KIKG…LKRE, KIYK…VSKR, and KVKG…YKKL. Cystine bridges form between C1140/C1161, C1175/C1251, and C1200/C1249. N-linked (GlcNAc...) asparagine glycosylation is found at N1267, N1300, N1452, N1492, N1508, N1621, and N1624. 3 disulfides stabilise this stretch: C1439–C1459, C1473–C1534, and C1483–C1532. 4 6-Cys domains span residues 1694–1907, 1910–2035, 2052–2199, and 2204–2374; these read NRHV…ISNS, KING…LNKD, NVHL…VRKN, and SFKL…SDNR. Intrachain disulfides connect C1698-C1726 and C1740-C1881. N-linked (GlcNAc...) asparagine glycosylation is found at N1753, N1804, N1882, N1920, N1954, and N1972. 4 disulfide bridges follow: C1914–C1938, C1952–C2017, C1963–C2015, and C2056–C2074. N-linked (GlcNAc...) asparagine glycosylation is found at N2178 and N2199. 3 disulfide bridges follow: C2208–C2229, C2243–C2356, and C2254–C2354. N2312 and N2351 each carry an N-linked (GlcNAc...) asparagine glycan. A disordered region spans residues 2410 to 2432; that stretch reads IKQQQEEEQQEQILKDQDDRLSR. Positions 2422–2432 are enriched in basic and acidic residues; sequence ILKDQDDRLSR. N2439, N2457, N2466, N2504, N2586, N2611, N2650, N2677, and N2688 each carry an N-linked (GlcNAc...) asparagine glycan. 6-Cys domains are found at residues 2448–2663, 2666–2827, 2831–2979, and 2982–3113; these read NEHI…ISSN, IIHG…IDEK, GKDI…INQG, and EIHG…PEPQ. 2 cysteine pairs are disulfide-bonded: C2452–C2476 and C2490–C2638. 3 cysteine pairs are disulfide-bonded: C2670/C2706, C2720/C2804, and C2730/C2802. An N-linked (GlcNAc...) asparagine glycan is attached at N2952. Cysteines 2986 and 3010 form a disulfide. N3011, N3016, N3066, N3093, and N3096 each carry an N-linked (GlcNAc...) asparagine glycan. 2 disulfide bridges follow: C3024/C3090 and C3035/C3088.

As to quaternary structure, heterodimer; heterodimerizes with PF45/48. Post-translationally, may be processed into a 310 kDa form as the parasite emerges from the host erythrocytes.

It localises to the cell surface. The protein resides in the cell membrane. Its function is as follows. Gametocyte surface protein required for male/female gamete fusion. Also required for male gamete exflagellation and interaction with host erythrocytes. The sequence is that of Gametocyte surface protein P230 (PFS230) from Plasmodium falciparum (isolate 3D7).